The sequence spans 76 residues: Monocarboxylate transporter 1 (76 aa).

Transmembrane regions (helical) follow at residues 1-18 (LSIL…MGLA), 28-48 (IQYF…LAPL), and 53-73 (IGFC…SSVL). Position 8 (D8) interacts with H(+). (S)-lactate is bound at residue R12.

Belongs to the major facilitator superfamily. Monocarboxylate porter (TC 2.A.1.13) family. As to quaternary structure, interacts with BSG; interaction mediates SLC16A1 targeting to the plasma membrane. Interacts with EMB; interaction mediates SLC16A1 targeting to the plasma membrane.

It localises to the cell membrane. Its subcellular location is the basolateral cell membrane. The protein localises to the apical cell membrane. It carries out the reaction (S)-lactate(in) + H(+)(in) = (S)-lactate(out) + H(+)(out). The enzyme catalyses acetate(out) + H(+)(out) = acetate(in) + H(+)(in). It catalyses the reaction acetoacetate(out) + H(+)(out) = acetoacetate(in) + H(+)(in). The catalysed reaction is pyruvate(out) + H(+)(out) = pyruvate(in) + H(+)(in). It carries out the reaction (R)-3-hydroxybutanoate(out) + H(+)(out) = (R)-3-hydroxybutanoate(in) + H(+)(in). The enzyme catalyses 3-methyl-2-oxobutanoate(out) + H(+)(out) = 3-methyl-2-oxobutanoate(in) + H(+)(in). It catalyses the reaction 4-methyl-2-oxopentanoate(out) + H(+)(out) = 4-methyl-2-oxopentanoate(in) + H(+)(in). The catalysed reaction is succinate(in) + 2 H(+)(in) = succinate(out) + 2 H(+)(out). Bidirectional proton-coupled monocarboxylate transporter. Catalyzes the rapid transport across the plasma membrane of many monocarboxylates such as lactate, pyruvate, acetate and the ketone bodies acetoacetate and beta-hydroxybutyrate, and thus contributes to the maintenance of intracellular pH. The transport direction is determined by the proton motive force and the concentration gradient of the substrate monocarboxylate. MCT1 is a major lactate exporter. Plays a role in cellular responses to a high-fat diet by modulating the cellular levels of lactate and pyruvate that contribute to the regulation of central metabolic pathways and insulin secretion, with concomitant effects on plasma insulin levels and blood glucose homeostasis. Facilitates the protonated monocarboxylate form of succinate export, that its transient protonation upon muscle cell acidification in exercising muscle and ischemic heart. Functions via alternate outward- and inward-open conformation states. Protonation and deprotonation is essential for the conformational transition. The protein is Monocarboxylate transporter 1 (SLC16A1) of Meriones unguiculatus (Mongolian jird).